A 425-amino-acid polypeptide reads, in one-letter code: Glutamate-1-semialdehyde 2,1-aminomutase (425 aa).

K266 is modified (N6-(pyridoxal phosphate)lysine).

This sequence belongs to the class-III pyridoxal-phosphate-dependent aminotransferase family. HemL subfamily. Homodimer. Pyridoxal 5'-phosphate serves as cofactor.

The protein resides in the cytoplasm. The catalysed reaction is (S)-4-amino-5-oxopentanoate = 5-aminolevulinate. Its pathway is porphyrin-containing compound metabolism; protoporphyrin-IX biosynthesis; 5-aminolevulinate from L-glutamyl-tRNA(Glu): step 2/2. This is Glutamate-1-semialdehyde 2,1-aminomutase from Nitratidesulfovibrio vulgaris (strain DSM 19637 / Miyazaki F) (Desulfovibrio vulgaris).